We begin with the raw amino-acid sequence, 197 residues long: Small ribosomal subunit protein uS5 (197 aa).

Residues 1-17 are compositionally biased toward basic and acidic residues; it reads MAERENRGRGRGRNREE. Disordered regions lie at residues 1–22 and 158–197; these read MAERENRGRGRGRNREEETPEF and NESSPRQVASRRGKKVADILPKRDDHPQIDGEQAPVSEEA. Positions 22 to 85 constitute an S5 DRBM domain; sequence FADRLVAINR…EQAKRQLIRV (64 aa). Basic and acidic residues predominate over residues 172–186; it reads KVADILPKRDDHPQI.

This sequence belongs to the universal ribosomal protein uS5 family. As to quaternary structure, part of the 30S ribosomal subunit. Contacts proteins S4 and S8.

With S4 and S12 plays an important role in translational accuracy. Its function is as follows. Located at the back of the 30S subunit body where it stabilizes the conformation of the head with respect to the body. In Jannaschia sp. (strain CCS1), this protein is Small ribosomal subunit protein uS5.